The primary structure comprises 350 residues: Probable transposase-like protein At4g04430 (350 aa).

Disordered stretches follow at residues 1–57 and 307–328; these read MPSD…PSVN and QIGQANPNEPPVSAAPEPQVAN. The span at 30–43 shows a compositional bias: low complexity; the sequence is SGVQGSGSRSGSTV.

This sequence belongs to the transposase 24 family.

The polypeptide is Probable transposase-like protein At4g04430 (Arabidopsis thaliana (Mouse-ear cress)).